A 381-amino-acid chain; its full sequence is Dof zinc finger protein 2 (381 aa).

The interval 19-81 is disordered; the sequence is MLMGANPNPN…ARPQKEKALN (63 aa). Low complexity-rich tracts occupy residues 23–32 and 40–59; these read ANPNPNGSSN and SAAS…AAGA. Over residues 68-79 the composition is skewed to basic and acidic residues; it reads TERRARPQKEKA. A Dof-type zinc finger spans residues 80 to 134; sequence LNCPRCNSTNTKFCYYNNYSLQQPRYFCKTCRRYWTEGGSLRNVPVGGGSRKNKR. 4 residues coordinate Zn(2+): Cys-82, Cys-85, Cys-107, and Cys-110. A disordered region spans residues 329-349; sequence AGDANSGGDHQYDHGKNQGGG.

Its subcellular location is the nucleus. Functionally, transcription factor that may transactivate seed storage protein genes in developing seeds. This Oryza sativa subsp. japonica (Rice) protein is Dof zinc finger protein 2.